The following is a 135-amino-acid chain: Nucleoside diphosphate kinase (135 aa).

Residues Lys9, Phe57, Arg85, Thr91, Arg102, and Asn112 each coordinate ATP. The active-site Pros-phosphohistidine intermediate is His115.

This sequence belongs to the NDK family. As to quaternary structure, homotetramer. Requires Mg(2+) as cofactor.

The protein localises to the cytoplasm. The enzyme catalyses a 2'-deoxyribonucleoside 5'-diphosphate + ATP = a 2'-deoxyribonucleoside 5'-triphosphate + ADP. It catalyses the reaction a ribonucleoside 5'-diphosphate + ATP = a ribonucleoside 5'-triphosphate + ADP. In terms of biological role, major role in the synthesis of nucleoside triphosphates other than ATP. The ATP gamma phosphate is transferred to the NDP beta phosphate via a ping-pong mechanism, using a phosphorylated active-site intermediate. The sequence is that of Nucleoside diphosphate kinase from Thermobifida fusca (strain YX).